Consider the following 84-residue polypeptide: U4-theraphotoxin-Hhn1b (84 aa).

The signal sequence occupies residues 1-22; the sequence is MKVTLIAILTCAAVLVLHTTAA. A propeptide spanning residues 23–47 is cleaved from the precursor; sequence EELEESQLMEVGMPDTELAAVDEER. Cystine bridges form between C51-C65, C55-C76, and C70-C81.

It belongs to the neurotoxin 12 (Hwtx-2) family. 02 (Hwtx-2) subfamily. In terms of tissue distribution, expressed by the venom gland.

The protein resides in the secreted. Functionally, postsynaptic neurotoxin. The polypeptide is U4-theraphotoxin-Hhn1b (Cyriopagopus hainanus (Chinese bird spider)).